Reading from the N-terminus, the 430-residue chain is Histidine--tRNA ligase (430 aa).

This sequence belongs to the class-II aminoacyl-tRNA synthetase family. As to quaternary structure, homodimer.

The protein localises to the cytoplasm. The catalysed reaction is tRNA(His) + L-histidine + ATP = L-histidyl-tRNA(His) + AMP + diphosphate + H(+). This chain is Histidine--tRNA ligase, found in Chlorobium limicola (strain DSM 245 / NBRC 103803 / 6330).